A 215-amino-acid chain; its full sequence is Protein C' (215 aa).

The interval 12 to 34 (MPSFLKKILKLRGRRQEDESRSR) is disordered. Residues 15 to 22 (FLKKILKL) are involved in self-degradation and in host STAT1 degradation. The segment covering 25-35 (RRQEDESRSRM) has biased composition (basic and acidic residues). Residues 36–66 (LSDSSTQSYQVNQLTSEGTEAGSTIPSTPSK) show a composition bias toward polar residues.

The protein belongs to the respirovirus protein C family. As to quaternary structure, the different isoforms interact (via C-terminus) with unphosphorylated and phosphorylated human STAT1 (via N-terminus), favoring the formation of parallel STAT1 homodimers. The different isoforms do not interact with host STAT2. C protein interacts with L protein; this interaction has an inhibitory effect on viral transcription and replication. Protein Y1 is produced not only by alternative initiation, but also by proteolytic cleavage of C'. Only alternative initiation is detected in vitro, whereas in vivo cleavage seems to be predominant.

It localises to the host cytoplasm. Its function is as follows. The different products prevent the establishment of cellular antiviral state by blocking the interferon-alpha/beta (IFN-alpha/beta) and IFN-gamma signaling pathways. They inhibit IFN-alpha/beta induced tyrosine phosphorylation of STAT1 and STAT2. Blocking the IFN-alpha/beta pathway requires binding to STAT1 in the cytoplasm. They inhibit IFN-gamma induced serine phosphorylation of STAT1. Block the IFN-gamma pathway by binding to and stabilizing the parallel form of the STAT1 dimer, further inducing high-molecular-weight complex formation and inhibition of transcription by IFN-gamma. May also have a role in preventing the cell to enter apoptosis. Modulate regulation of viral transcription and replication. Overexpression inhibits the viral RNA polymerase. The absence of all C', C and Y1 proteins leads to viral delayed growth. Plays an important role in virion particles release. Modulates virion shape. In Sendai virus (strain Ohita) (SeV), this protein is Protein C' (P/V/C).